Consider the following 189-residue polypeptide: Chitin synthase 1 (189 aa).

The protein belongs to the chitin synthase family.

Its subcellular location is the cell membrane. It catalyses the reaction [(1-&gt;4)-N-acetyl-beta-D-glucosaminyl](n) + UDP-N-acetyl-alpha-D-glucosamine = [(1-&gt;4)-N-acetyl-beta-D-glucosaminyl](n+1) + UDP + H(+). Its function is as follows. Polymerizes chitin, a structural polymer of the cell wall and septum, by transferring the sugar moiety of UDP-GlcNAc to the non-reducing end of the growing chitin polymer. The protein is Chitin synthase 1 (CHS1) of Schizophyllum commune (Split gill fungus).